The sequence spans 206 residues: Pyridoxine/pyridoxamine 5'-phosphate oxidase (206 aa).

FMN-binding positions include 55 to 60 (RVVLLK), 70 to 71 (YT), Arg-76, Lys-77, and Gln-99. Lys-60 contributes to the substrate binding site. The substrate site is built by Tyr-117, Arg-121, and Ser-125. FMN contacts are provided by residues 134–135 (QS) and Trp-179. 185 to 187 (RLH) contacts substrate. Position 189 (Arg-189) interacts with FMN.

Belongs to the pyridoxamine 5'-phosphate oxidase family. In terms of assembly, homodimer. The cofactor is FMN.

The catalysed reaction is pyridoxamine 5'-phosphate + O2 + H2O = pyridoxal 5'-phosphate + H2O2 + NH4(+). The enzyme catalyses pyridoxine 5'-phosphate + O2 = pyridoxal 5'-phosphate + H2O2. Its pathway is cofactor metabolism; pyridoxal 5'-phosphate salvage; pyridoxal 5'-phosphate from pyridoxamine 5'-phosphate: step 1/1. The protein operates within cofactor metabolism; pyridoxal 5'-phosphate salvage; pyridoxal 5'-phosphate from pyridoxine 5'-phosphate: step 1/1. Catalyzes the oxidation of either pyridoxine 5'-phosphate (PNP) or pyridoxamine 5'-phosphate (PMP) into pyridoxal 5'-phosphate (PLP). The protein is Pyridoxine/pyridoxamine 5'-phosphate oxidase of Myxococcus xanthus (strain DK1622).